Reading from the N-terminus, the 154-residue chain is Endoribonuclease YbeY (154 aa).

Zn(2+) is bound by residues His114, His118, and His124.

It belongs to the endoribonuclease YbeY family. Zn(2+) serves as cofactor.

The protein localises to the cytoplasm. Functionally, single strand-specific metallo-endoribonuclease involved in late-stage 70S ribosome quality control and in maturation of the 3' terminus of the 16S rRNA. The sequence is that of Endoribonuclease YbeY from Histophilus somni (strain 2336) (Haemophilus somnus).